Consider the following 447-residue polypeptide: Phosphoglucosamine mutase (447 aa).

Ser-102 serves as the catalytic Phosphoserine intermediate. Residues Ser-102, Asp-241, Asp-243, and Asp-245 each contribute to the Mg(2+) site. At Ser-102 the chain carries Phosphoserine.

This sequence belongs to the phosphohexose mutase family. Requires Mg(2+) as cofactor. Post-translationally, activated by phosphorylation.

It carries out the reaction alpha-D-glucosamine 1-phosphate = D-glucosamine 6-phosphate. In terms of biological role, catalyzes the conversion of glucosamine-6-phosphate to glucosamine-1-phosphate. This chain is Phosphoglucosamine mutase, found in Pseudomonas savastanoi pv. phaseolicola (strain 1448A / Race 6) (Pseudomonas syringae pv. phaseolicola (strain 1448A / Race 6)).